We begin with the raw amino-acid sequence, 675 residues long: NADH-quinone oxidoreductase subunit G (675 aa).

Residues 1–78 (MIKLIIDGSE…GMVIHTDTSM (78 aa)) form the 2Fe-2S ferredoxin-type domain. Residues Cys34, Cys45, Cys48, and Cys62 each contribute to the [2Fe-2S] cluster site. The 40-residue stretch at 78-117 (MVKKAREGVMEFLLINHPLDCPICDQGGECDLQDQAFRYG) folds into the 4Fe-4S His(Cys)3-ligated-type domain. [4Fe-4S] cluster-binding residues include His94, Cys98, Cys101, Cys107, Cys146, Cys149, Cys152, and Cys196. The region spanning 215–271 (LKHTASIGVHDAEGSNIRIDSRADEIMRILPSVNEAINEAWISDKNRFCYDGLKYQR) is the 4Fe-4S Mo/W bis-MGD-type domain.

The protein belongs to the complex I 75 kDa subunit family. Requires [2Fe-2S] cluster as cofactor. [4Fe-4S] cluster serves as cofactor.

It carries out the reaction a quinone + NADH + 5 H(+)(in) = a quinol + NAD(+) + 4 H(+)(out). Its function is as follows. NDH-1 shuttles electrons from NADH, via FMN and iron-sulfur (Fe-S) centers, to quinones in the respiratory chain. Couples the redox reaction to proton translocation (for every two electrons transferred, four hydrogen ions are translocated across the cytoplasmic membrane), and thus conserves the redox energy in a proton gradient. The chain is NADH-quinone oxidoreductase subunit G (nuoG) from Rickettsia typhi (strain ATCC VR-144 / Wilmington).